Reading from the N-terminus, the 1397-residue chain is MSGKPAARQGDMTQYGGSIVQGSAGVRIGAPTGVACSVCPGGVTSGHPVNPLLGAKVLPGETDIALPGPLPFILSRTYSSYRTKTPAPVGSLGPGWKMPADIRLQLRDNTLILSDNGGRSLYFEHLFPGEDGYSRSESLWLVRGGVAKLDEGHRLAALWQALPEELRLSPHRYLATNSPQGPWWLLGWCERVPEADEVLPAPLPPYRVLTGLVDRFGRTQTFHREAAGEFSGEITGVTDGAGRHFRLVLTTQAQRAEEARQQAISGGTEPSAFPDTLPGYTEYGRDNGIRLSAVWLTHDPEYPENLPAAPLVRYGWTPRGELAAVYDRSNTQVRSFTYDDKYRGRMVAHRHTGRPEICYRYDSDGRVTEQLNPAGLSYTYQYEKDRITITDSLNRREVLHTQGEGGLKRVVKKEHADGSVTQSQFDAVGRLRAQTDAAGRTTEYSPDVVTGLITRITTPDGRASAFYYNHHSQLTSATGPDGLEIRREYDEWGRLIQETAPDGDITRYRYDNPHSDLPCATEDATGSRKTMTWSRYGQLLSFTDCSGYVTRYDHDRFGQVTAVHREEGLSQYRAYDSRGQLIAVKDTQGHETRYEYNAAGDLTTVIAPDGSRNGTQYDAWGKAICTTQGGLTRSMEYDAAGRVIRLTSENGSHTTFRYDVLDRLIQETGFDGRTQRYHHDLTGKLIRSEDEGLVTHWHYDEADRLTHRTVNGETAERWQYDERGWLTDISHISEGHRVTVHYGYDSKGRLASEHLTVHHPQTNELLWQHETRHAYNAQGLANRCIPDSLPAVEWLTYGSGWLSGMKLGDTPLVEYTRDRLHRETLRSFGRYELTTAYTPAGQLQSQHLNSLLSDRDYTWNDNGELIRISSPRQTRSYSYSTTGRLTGVHTTAANLDIRIPYTTDPAGNRLPDPELHPDSALSMWPDNRIARDAHYLYRYDRHGRLTEKTDLIPEGVIRTDDERTHRYHYDSQHRLVHYTRTQYAEPLVESRYLYDPLGRRVAKRVWRRERDLTGWMSLSRKPQVTWYGWDGDRLTTIQNDRTRIQTIYQPGSFTPLIRVETATGELAKTQRRSLADTLQQSGGEDGGSVVFPPVLVQMLDRLESEILADRVSEESRRWLASCGLTVAQMQSQMDPVYTPARKIHLYHCDHRGLPLALISTEGTTAWYAEYDEWGNLLNEENPHQLQQLIRLPGQQYDEESGLYYNRHRYYDPLQGRYITQDPIGLKGGWNFYQYPLNPISNIDPLGLETLKCIKPLHSMGGTGERSGPDIWGNPFYHQYLCVPDGKGDYTCGGQDQRGESKGDGLWGPGKASNDTKEAAGRCDLVETDNSCVENCLKGKFKEVRPRYSVLPDIFTPINLGLFKNCQDWSNDSLETCKMKCSGNNIGRFIRFVFTGVM.

28 repeat units span residues 330-352 (NTQVRSFTYDDKYRGRMVAHRHT), 353-374 (GRPEICYRYDSDGRVTEQLNPA), 375-417 (GLSY…EHAD), 418-438 (GSVTQSQFDAVGRLRAQTDAA), 439-460 (GRTTEYSPDVVTGLITRITTPD), 461-481 (GRASAFYYNHHSQLTSATGPD), 482-502 (GLEIRREYDEWGRLIQETAPD), 503-525 (GDITRYRYDNPHSDLPCATEDAT), 526-546 (GSRKTMTWSRYGQLLSFTDCS), 547-567 (GYVTRYDHDRFGQVTAVHREE), 568-588 (GLSQYRAYDSRGQLIAVKDTQ), 589-609 (GHETRYEYNAAGDLTTVIAPD), 610-629 (GSRNGTQYDAWGKAICTTQG), 630-650 (GLTRSMEYDAAGRVIRLTSEN), 651-671 (GSHTTFRYDVLDRLIQETGFD), 672-691 (GRTQRYHHDLTGKLIRSEDE), 692-711 (GLVTHWHYDEADRLTHRTVN), 712-734 (GETAERWQYDERGWLTDISHISE), 735-758 (GHRVTVHYGYDSKGRLASEHLTVH), 808-828 (GDTPLVEYTRDRLHRETLRSF), 829-850 (GRYELTTAYTPAGQLQSQHLNS), 851-871 (LLSDRDYTWNDNGELIRISSP), 872-894 (RQTRSYSYSTTGRLTGVHTTAAN), 895-930 (LDIRIPYTTDPAGNRLPDPELHPDSALSMWPDNRIA), 931-959 (RDAHYLYRYDRHGRLTEKTDLIPEGVIRT), 960-984 (DDERTHRYHYDSQHRLVHYTRTQYA), 985-1019 (EPLVESRYLYDPLGRRVAKRVWRRERDLTGWMSLS), and 1162-1186 (GTTAWYAEYDEWGNLLNEENPHQLQ). A 28 X approximate tandem repeats region spans residues 330–1186 (NTQVRSFTYD…LNEENPHQLQ (857 aa)). The segment at 1292–1312 (GGQDQRGESKGDGLWGPGKAS) is disordered.

The protein belongs to the RHS family.

Its function is as follows. Rhs elements have a nonessential function. They may play an important role in the natural ecology of the cell. The protein is Protein RhsC (rhsC) of Escherichia coli (strain K12).